The primary structure comprises 87 residues: MKTFDDLFGELTRIAAERPEGSGTVRELDGGVHAIGKKVVEEAAEVWMAAEHESDDRAAEEISQLLYHVQVMMIARGLTLEDVGRHL.

Belongs to the PRA-PH family.

The protein resides in the cytoplasm. The enzyme catalyses 1-(5-phospho-beta-D-ribosyl)-ATP + H2O = 1-(5-phospho-beta-D-ribosyl)-5'-AMP + diphosphate + H(+). The protein operates within amino-acid biosynthesis; L-histidine biosynthesis; L-histidine from 5-phospho-alpha-D-ribose 1-diphosphate: step 2/9. In Clavibacter sepedonicus (Clavibacter michiganensis subsp. sepedonicus), this protein is Phosphoribosyl-ATP pyrophosphatase.